The primary structure comprises 166 residues: Small ribosomal subunit protein uS5 (166 aa).

In terms of domain architecture, S5 DRBM spans 12–75 (YIEKLVQVNR…EAARRNMIQV (64 aa)).

This sequence belongs to the universal ribosomal protein uS5 family. As to quaternary structure, part of the 30S ribosomal subunit. Contacts proteins S4 and S8.

Its function is as follows. With S4 and S12 plays an important role in translational accuracy. In terms of biological role, located at the back of the 30S subunit body where it stabilizes the conformation of the head with respect to the body. The chain is Small ribosomal subunit protein uS5 from Ectopseudomonas mendocina (strain ymp) (Pseudomonas mendocina).